The primary structure comprises 577 residues: Polyadenylate-binding protein, cytoplasmic and nuclear (577 aa).

A compositionally biased stretch (basic and acidic residues) spans 1 to 10; the sequence is MADITDKTAE. The tract at residues 1 to 36 is disordered; the sequence is MADITDKTAEQLENLNIQDDQKQAATGSESQSVENS. At Ala-2 the chain carries N-acetylalanine. A Glycyl lysine isopeptide (Lys-Gly) (interchain with G-Cter in ubiquitin) cross-link involves residue Lys-7. Positions 9 to 61 are required and sufficient for nuclear export; sequence AEQLENLNIQDDQKQAATGSESQSVENSSASLYVGDLEPSVSEAHLYDIFSPI. The segment covering 11-27 has biased composition (polar residues); the sequence is QLENLNIQDDQKQAATG. Residues 12-17 carry the Nuclear export signal motif; sequence LENLNI. RRM domains follow at residues 38 to 116, 126 to 203, 219 to 296, and 322 to 399; these read ASLY…WSQR, GNIF…PHLS, TNLY…RAQK, and VNLF…IAQR. Residue Arg-107 is modified to Omega-N-methylarginine. At Ser-249 the chain carries Phosphoserine. Residues 281-317 are required and sufficient for nuclear import; sequence DSELNGEKLYVGRAQKKNERMHVLKKQYEAYRLEKMA. At Ser-332 the chain carries Phosphoserine. Lys-337 is covalently cross-linked (Glycyl lysine isopeptide (Lys-Gly) (interchain with G-Cter in ubiquitin)). A Phosphoserine modification is found at Ser-405. The interaction with SUP35 stretch occupies residues 473–577; the sequence is PPQFRNGPVY…KEQEQQTEQA (105 aa). Residues 489–568 enclose the PABC domain; it reads GFPRNANDNN…ASAAYESFKK (80 aa).

It belongs to the polyadenylate-binding protein type-1 family. In terms of assembly, binds to poly(A) mRNA to form a periodic structure with a packing density of one molecule per 25 adenylate residues. Interacts with the nuclear export factor CRM1 and with the importin SXM1. Interacts with RNA15, a component of the cleavage factor IA (CFIA) complex. Interacts with translation initiation factor eIF4G (TIF4631 or TIF4632) and release factor eRF3 (SUP35). Interacts with the PAB-dependent poly(A)-nuclease (PAN) complex regulatory subunit PAN3. Interacts with ARF1, DCP1, PBP1, the Hsp70 chaperone SSA1, and TPA1. Interacts with PAT1 in an RNA-dependent manner.

The protein resides in the cytoplasm. Its subcellular location is the nucleus. Binds the poly(A) tail of mRNA. Appears to be an important mediator of the multiple roles of the poly(A) tail in mRNA biogenesis, stability and translation. In the nucleus, interacts with the nuclear cleavage factor IA (CFIA), which is required for both mRNA cleavage and polyadenylation. Is also required for efficient mRNA export to the cytoplasm. Acts in concert with a poly(A)-specific nuclease (PAN) to affect poly(A) tail shortening, which may occur concomitantly with either nucleocytoplasmic mRNA transport or translational initiation. Regulates PAN activity via interaction with the stimulator PAN3 or the inhibitor PBP1. In the cytoplasm, affects both translation and mRNA decay. Stimulates translation by interaction with translation initiation factor eIF4G, a subunit of the cap-binding complex eIF4F, bringing the 5'- and 3'-ends of the mRNA in proximity. The formation of this circular mRNP structure appears to be critical for the synergistic effects of the cap and the poly(A) tail in facilitating translation initiation, recycling of ribosomes, and mRNA stability. Also regulates translation termination by recruiting eukaryotic release factor 3 (eRF3). Interaction with eRF3 is also required for regulation of normal mRNA decay through translation termination-coupled poly(A) shortening, probably mediated by PAN. Loss of PAB1 from the mRNP after deadenylation triggers mRNA degradation. Inhibits the major cytoplasmic mRNA deadenylase CCR4-NOT complex. Is also associated peripherally with COPI vesicles through its interaction with ARF1, and this is required for correct localization of the asymmetrically distributed ASH1 mRNA. This is Polyadenylate-binding protein, cytoplasmic and nuclear (PAB1) from Saccharomyces cerevisiae (strain ATCC 204508 / S288c) (Baker's yeast).